We begin with the raw amino-acid sequence, 156 residues long: Probable cyclic pyranopterin monophosphate synthase (156 aa).

Substrate is bound by residues 74 to 76 (LCH) and 110 to 111 (ME). Aspartate 125 is an active-site residue.

It belongs to the MoaC family. Homohexamer; trimer of dimers.

The catalysed reaction is (8S)-3',8-cyclo-7,8-dihydroguanosine 5'-triphosphate = cyclic pyranopterin phosphate + diphosphate. Its pathway is cofactor biosynthesis; molybdopterin biosynthesis. Catalyzes the conversion of (8S)-3',8-cyclo-7,8-dihydroguanosine 5'-triphosphate to cyclic pyranopterin monophosphate (cPMP). This is Probable cyclic pyranopterin monophosphate synthase from Thermococcus kodakarensis (strain ATCC BAA-918 / JCM 12380 / KOD1) (Pyrococcus kodakaraensis (strain KOD1)).